The following is a 290-amino-acid chain: Ribonuclease HIII (290 aa).

The RNase H type-2 domain occupies 78–290 (LPLIGTDEVG…FKNTEKAKNA (213 aa)). Residues D84, E85, and D187 each contribute to the a divalent metal cation site.

The protein belongs to the RNase HII family. RnhC subfamily. Mn(2+) serves as cofactor. Requires Mg(2+) as cofactor.

The protein localises to the cytoplasm. The catalysed reaction is Endonucleolytic cleavage to 5'-phosphomonoester.. Its function is as follows. Endonuclease that specifically degrades the RNA of RNA-DNA hybrids. The chain is Ribonuclease HIII from Streptococcus pneumoniae (strain CGSP14).